A 129-amino-acid chain; its full sequence is Flagellar assembly factor FliW (129 aa).

It belongs to the FliW family. As to quaternary structure, interacts with flagellins FlaA and FlaB but not with FlaC; recognizes glycosylated and non-glycosylated FlaA equally. Interacts with CsrA. May form a 3-way complex of flagellin, FliS and FliW simultaneously in which FliS and FliW do not directly interact.

It is found in the cytoplasm. Its function is as follows. Acts as an anti-CsrA protein, binds CsrA and prevents it from repressing translation of its target genes, one of which is flagellin. Binds to flagellin and participates in the assembly of the flagellum. Functionally, overexpression leads to increased levels of FlaA and FlaB, but levels of FlaC remain stable. Involved in post-transcriptional regulation of flagellin biosynthesis. In Campylobacter jejuni subsp. jejuni serotype O:6 (strain 81116 / NCTC 11828), this protein is Flagellar assembly factor FliW.